Consider the following 637-residue polypeptide: 1-deoxy-D-xylulose-5-phosphate synthase (637 aa).

Thiamine diphosphate-binding positions include His74 and 115-117; that span reads GHS. Asp146 lines the Mg(2+) pocket. Thiamine diphosphate contacts are provided by residues 147–148, Asn175, Tyr285, and Glu366; that span reads GA. Asn175 serves as a coordination point for Mg(2+).

Belongs to the transketolase family. DXPS subfamily. As to quaternary structure, homodimer. Mg(2+) is required as a cofactor. Requires thiamine diphosphate as cofactor.

The enzyme catalyses D-glyceraldehyde 3-phosphate + pyruvate + H(+) = 1-deoxy-D-xylulose 5-phosphate + CO2. It functions in the pathway metabolic intermediate biosynthesis; 1-deoxy-D-xylulose 5-phosphate biosynthesis; 1-deoxy-D-xylulose 5-phosphate from D-glyceraldehyde 3-phosphate and pyruvate: step 1/1. In terms of biological role, catalyzes the acyloin condensation reaction between C atoms 2 and 3 of pyruvate and glyceraldehyde 3-phosphate to yield 1-deoxy-D-xylulose-5-phosphate (DXP). This chain is 1-deoxy-D-xylulose-5-phosphate synthase, found in Pelotomaculum thermopropionicum (strain DSM 13744 / JCM 10971 / SI).